Consider the following 155-residue polypeptide: Protein-export protein SecB (155 aa).

The protein belongs to the SecB family. As to quaternary structure, homotetramer, a dimer of dimers. One homotetramer interacts with 1 SecA dimer.

It localises to the cytoplasm. Functionally, one of the proteins required for the normal export of preproteins out of the cell cytoplasm. It is a molecular chaperone that binds to a subset of precursor proteins, maintaining them in a translocation-competent state. It also specifically binds to its receptor SecA. The polypeptide is Protein-export protein SecB (Salmonella heidelberg (strain SL476)).